The chain runs to 829 residues: Transmembrane protease serine 7 (829 aa).

The Cytoplasmic segment spans residues 1–62 (MDKEKSDPSC…RAPFWNVQNK (62 aa)). The tract at residues 26-52 (SVPGKLPGRRPPRKPIGKPRPRKQPKK) is disordered. Over residues 32–52 (PGRRPPRKPIGKPRPRKQPKK) the composition is skewed to basic residues. Residues 63–83 (IILFTVFLFILAVTAWTLLWL) traverse the membrane as a helical; Signal-anchor for type II membrane protein segment. Topologically, residues 84 to 829 (YISKTESKDA…WIHKYVPSLL (746 aa)) are extracellular. An SEA domain is found at 92–220 (DAFYFVGMFR…DSVVLNAGLR (129 aa)). 3 disulfides stabilise this stretch: cysteine 233–cysteine 259, cysteine 285–cysteine 308, and cysteine 351–cysteine 382. CUB domains follow at residues 233 to 346 (CSRY…FEVI) and 351 to 467 (CEST…YNIS). N-linked (GlcNAc...) asparagine glycosylation is found at asparagine 401 and asparagine 465. 3 LDL-receptor class A domains span residues 469-505 (PCPA…LFCV), 503-540 (FCVT…QNCT), and 544-581 (PCTS…EGCG). Disulfide bonds link cysteine 470–cysteine 482, cysteine 477–cysteine 495, cysteine 489–cysteine 504, cysteine 511–cysteine 530, cysteine 524–cysteine 539, cysteine 545–cysteine 557, cysteine 552–cysteine 571, cysteine 565–cysteine 580, and cysteine 617–cysteine 633. Positions 592 to 826 (IVGGSDSQEG…FVPWIHKYVP (235 aa)) constitute a Peptidase S1 domain. Active-site charge relay system residues include histidine 632 and aspartate 680. Intrachain disulfides connect cysteine 716–cysteine 782, cysteine 748–cysteine 761, and cysteine 772–cysteine 802. Catalysis depends on serine 776, which acts as the Charge relay system.

It belongs to the peptidase S1 family. In terms of assembly, forms a heterodimer with SERPINA5. In terms of processing, N-glycosylated. As to expression, expressed in brain, eye, testis, skin, epididymis and salivary gland with lower levels in heart, skeletal muscle, thymus, ovary, prostate and uterus.

The protein resides in the cell membrane. Functionally, serine protease which preferentially hydrolyzes peptides with Arg at the P1 position. The polypeptide is Transmembrane protease serine 7 (Tmprss7) (Mus musculus (Mouse)).